A 264-amino-acid polypeptide reads, in one-letter code: Acyl-[acyl-carrier-protein]--UDP-N-acetylglucosamine O-acyltransferase (264 aa).

This sequence belongs to the transferase hexapeptide repeat family. LpxA subfamily. Homotrimer.

The protein resides in the cytoplasm. The catalysed reaction is a (3R)-hydroxyacyl-[ACP] + UDP-N-acetyl-alpha-D-glucosamine = a UDP-3-O-[(3R)-3-hydroxyacyl]-N-acetyl-alpha-D-glucosamine + holo-[ACP]. Its pathway is glycolipid biosynthesis; lipid IV(A) biosynthesis; lipid IV(A) from (3R)-3-hydroxytetradecanoyl-[acyl-carrier-protein] and UDP-N-acetyl-alpha-D-glucosamine: step 1/6. In terms of biological role, involved in the biosynthesis of lipid A, a phosphorylated glycolipid that anchors the lipopolysaccharide to the outer membrane of the cell. The polypeptide is Acyl-[acyl-carrier-protein]--UDP-N-acetylglucosamine O-acyltransferase (Chlorobaculum tepidum (strain ATCC 49652 / DSM 12025 / NBRC 103806 / TLS) (Chlorobium tepidum)).